The following is a 190-amino-acid chain: 3-isopropylmalate dehydratase small subunit (190 aa).

Belongs to the LeuD family. LeuD type 1 subfamily. In terms of assembly, heterodimer of LeuC and LeuD.

The catalysed reaction is (2R,3S)-3-isopropylmalate = (2S)-2-isopropylmalate. It participates in amino-acid biosynthesis; L-leucine biosynthesis; L-leucine from 3-methyl-2-oxobutanoate: step 2/4. Functionally, catalyzes the isomerization between 2-isopropylmalate and 3-isopropylmalate, via the formation of 2-isopropylmaleate. In Staphylococcus aureus (strain USA300), this protein is 3-isopropylmalate dehydratase small subunit.